Here is a 963-residue protein sequence, read N- to C-terminus: Importin-13 (963 aa).

HEAT repeat units follow at residues 24-54 (ENVE…QAQV), 56-88 (PQAW…KISR), 95-135 (TDQY…LSMM), 142-179 (AVAD…EFQT), 194-231 (LAVE…SWVQ), 236-268 (LQDC…NAIS), 276-325 (VNTL…ALLD), 330-372 (WQSF…DDIL), 375-438 (EAEK…YEML), 440-476 (AELL…FQSI), 487-522 (VVPG…WLAD), 524-558 (PVMI…CREC), 562-600 (LPPY…LLSA), 603-648 (VEEN…SNLF), 676-716 (PVVV…VKTL), 720-754 (FAPM…VHIF), 761-803 (FPPI…ALKR), 815-845 (VKAV…TELL), 860-893 (EDGR…FALN), and 897-931 (FSLL…QQIL). In terms of domain architecture, Importin N-terminal spans 45–111 (AQKWLMQAQV…KAHSFTQITR (67 aa)).

This sequence belongs to the importin beta family. As to quaternary structure, interacts with UBC9, RAN, RBM8A, eIF-1A and PAX6. As to expression, expressed in fetal brain, heart, intestine and kidney.

The protein resides in the cytoplasm. The protein localises to the nucleus. Its function is as follows. Functions in nuclear protein import as nuclear transport receptor. Serves as receptor for nuclear localization signals (NLS) in cargo substrates. Is thought to mediate docking of the importin/substrate complex to the nuclear pore complex (NPC) through binding to nucleoporin and the complex is subsequently translocated through the pore by an energy requiring, Ran-dependent mechanism. At the nucleoplasmic side of the NPC, Ran binds to the importin, the importin/substrate complex dissociates and importin is re-exported from the nucleus to the cytoplasm where GTP hydrolysis releases Ran. The directionality of nuclear import is thought to be conferred by an asymmetric distribution of the GTP- and GDP-bound forms of Ran between the cytoplasm and nucleus. Mediates the nuclear import of UBC9, the RBM8A/MAGOH complex, PAX6 and probably other members of the paired homeobox family. Also mediates nuclear export of eIF-1A, and the cytoplasmic release of eIF-1A is triggered by the loading of import substrates onto IPO13. This chain is Importin-13 (Ipo13), found in Rattus norvegicus (Rat).